The chain runs to 239 residues: Homeobox protein Nkx-2.8 (239 aa).

Over residues 1-11 (MATSGRLSFTV) the composition is skewed to polar residues. Positions 1–87 (MATSGRLSFT…GSDAEKRKKR (87 aa)) are disordered. A compositionally biased stretch (basic and acidic residues) spans 21–32 (DAQHLPRREPEP). Low complexity predominate over residues 62 to 79 (SPPDSSQRPSARPASPGS). A DNA-binding region (homeobox) is located at residues 84–143 (RKKRRVLFSKAQTLELERRFRQQRYLSAPEREQLASLLRLTPTQVKIWFQNHRYKLKRAR).

This sequence belongs to the NK-2 homeobox family.

Its subcellular location is the nucleus. This is Homeobox protein Nkx-2.8 (NKX2-8) from Homo sapiens (Human).